The following is a 171-amino-acid chain: Ribulose bisphosphate carboxylase small subunit, chloroplastic (171 aa).

A chloroplast-targeting transit peptide spans 1–50; sequence MATGAGAGAATVVSAFTGLKSTAQFPSSFKMSNAAAEWEQKTTSNGGRVR.

Belongs to the RuBisCO small chain family. Heterohexadecamer of 8 large and 8 small subunits.

It localises to the plastid. The protein resides in the chloroplast. In terms of biological role, ruBisCO catalyzes two reactions: the carboxylation of D-ribulose 1,5-bisphosphate, the primary event in carbon dioxide fixation, as well as the oxidative fragmentation of the pentose substrate. Both reactions occur simultaneously and in competition at the same active site. Although the small subunit is not catalytic it is essential for maximal activity. In Pinus thunbergii (Japanese black pine), this protein is Ribulose bisphosphate carboxylase small subunit, chloroplastic.